Reading from the N-terminus, the 173-residue chain is Archaemetzincin (173 aa).

His130 serves as a coordination point for Zn(2+). The Proton acceptor role is filled by Glu131. The Zn(2+) site is built by His134, His140, Cys141, Cys146, Cys165, and Cys168.

This sequence belongs to the peptidase M54 family. Monomer. The cofactor is Zn(2+).

Its function is as follows. Probable zinc metalloprotease whose natural substrate is unknown. This Natronomonas pharaonis (strain ATCC 35678 / DSM 2160 / CIP 103997 / JCM 8858 / NBRC 14720 / NCIMB 2260 / Gabara) (Halobacterium pharaonis) protein is Archaemetzincin.